The primary structure comprises 732 residues: 1,4-alpha-glucan branching enzyme GlgB (732 aa).

Asp-415 (nucleophile) is an active-site residue. Residue Glu-468 is the Proton donor of the active site.

It belongs to the glycosyl hydrolase 13 family. GlgB subfamily. Monomer.

It catalyses the reaction Transfers a segment of a (1-&gt;4)-alpha-D-glucan chain to a primary hydroxy group in a similar glucan chain.. Its pathway is glycan biosynthesis; glycogen biosynthesis. Its function is as follows. Catalyzes the formation of the alpha-1,6-glucosidic linkages in glycogen by scission of a 1,4-alpha-linked oligosaccharide from growing alpha-1,4-glucan chains and the subsequent attachment of the oligosaccharide to the alpha-1,6 position. This chain is 1,4-alpha-glucan branching enzyme GlgB, found in Nitrosomonas eutropha (strain DSM 101675 / C91 / Nm57).